The chain runs to 120 residues: Large ribosomal subunit protein uL24 (120 aa).

The segment at 1-33 is disordered; the sequence is MTRQPHKQRNRQERAALHEKQKQVRAPLSPELR. Basic and acidic residues predominate over residues 10–22; sequence NRQERAALHEKQK.

This sequence belongs to the universal ribosomal protein uL24 family. Part of the 50S ribosomal subunit.

Functionally, one of two assembly initiator proteins, it binds directly to the 5'-end of the 23S rRNA, where it nucleates assembly of the 50S subunit. Located at the polypeptide exit tunnel on the outside of the subunit. This chain is Large ribosomal subunit protein uL24, found in Natronomonas pharaonis (strain ATCC 35678 / DSM 2160 / CIP 103997 / JCM 8858 / NBRC 14720 / NCIMB 2260 / Gabara) (Halobacterium pharaonis).